The following is a 329-amino-acid chain: Caveolae-associated protein 4a (329 aa).

Disordered stretches follow at residues 198–260 (SKEN…NIAK) and 274–329 (KERT…IHED). Positions 198-262 (SKENMNKTRE…RLKENIAKKA (65 aa)) form a coiled coil. A compositionally biased stretch (basic and acidic residues) spans 201 to 220 (NMNKTREKTRENLSKTKESL). The span at 221 to 232 (SKTGQTLGTKFN) shows a compositional bias: polar residues. Positions 242–260 (EQREKIKQSSERLKENIAK) are enriched in basic and acidic residues. Over residues 279 to 290 (AEGQEGAEAEPA) the composition is skewed to low complexity. At Thr292 the chain carries Phosphothreonine. Residues 310 to 329 (TENKREGPVSEEGATRIHED) show a composition bias toward basic and acidic residues.

The protein belongs to the CAVIN family.

It localises to the cytoplasm. It is found in the myofibril. The protein resides in the sarcomere. Its subcellular location is the membrane. The protein localises to the caveola. Its function is as follows. Induces rhoa activation and activates nppa transcription and myofibrillar organization through the rho/rock signaling pathway. The polypeptide is Caveolae-associated protein 4a (cavin4a) (Danio rerio (Zebrafish)).